We begin with the raw amino-acid sequence, 867 residues long: Nuclear body protein SP140 (867 aa).

Positions 22–138 (VAEIQNVEGQ…IYRSFQNVCY (117 aa)) constitute an HSR domain. Disordered stretches follow at residues 260-341 (TYST…EEPQ), 365-432 (TPQV…SEEL), and 486-580 (IANN…KHKD). Positions 268–301 (KQGEEEGRNSPRKRNQDKEKYQESPEGRDKETFD) are enriched in basic and acidic residues. 2 stretches are compositionally biased toward acidic residues: residues 323 to 341 (EGEEGSDDCSEMCDGEEPQ) and 384 to 397 (EGEEGSDDCSEMCD). A compositionally biased stretch (low complexity) spans 404–416 (ASSSLARRGSVSS). Composition is skewed to basic residues over residues 494-512 (KPKRKRRKKRGHGWSRMRM) and 567-577 (QKRVRSRASRK). The Nuclear localization signal signature appears at 495-514 (PKRKRRKKRGHGWSRMRMRR). The SAND domain occupies 580–661 (DETVDFKAPL…RWLMENGFLP (82 aa)). The segment at 690-736 (LDECEVCRDGGELFCCDTCSRVFHEDCHIPPVEAERTPWNCIFCRMK) adopts a PHD-type zinc-finger fold. Threonine 726 carries the phosphothreonine modification. The region spanning 754-857 (QMCPEEQLKC…AEFEKNFKEV (104 aa)) is the Bromo domain.

As to quaternary structure, interacts with PIN1. In terms of processing, phosphorylation at Thr-726 promotes binding of PIN1 and subsequent isomerization of Pro-727. In terms of tissue distribution, high levels in spleen and peripheral blood leukocytes, much lower levels in tonsils, thymus, prostate, ovary, small intestine, and colon. Very low levels in heart, brain, placenta, lung, liver, skeletal muscle, kidney, and pancreas. Not detected in brain, liver and muscle.

The protein resides in the nucleus. It is found in the PML body. It localises to the cytoplasm. Functionally, component of the nuclear body, also known as nuclear domain 10, PML oncogenic domain, and KR body. May be involved in the pathogenesis of acute promyelocytic leukemia and viral infection. May play a role in chromatin-mediated regulation of gene expression although it does not bind to histone H3 tails. The protein is Nuclear body protein SP140 of Homo sapiens (Human).